We begin with the raw amino-acid sequence, 1193 residues long: Laminin subunit gamma-2 (1193 aa).

Positions methionine 1–alanine 21 are cleaved as a signal peptide. 12 cysteine pairs are disulfide-bonded: cysteine 28-cysteine 37, cysteine 30-cysteine 53, cysteine 56-cysteine 65, cysteine 68-cysteine 81, cysteine 84-cysteine 96, cysteine 86-cysteine 102, cysteine 104-cysteine 113, cysteine 116-cysteine 128, cysteine 139-cysteine 150, cysteine 141-cysteine 155, cysteine 157-cysteine 166, and cysteine 169-cysteine 184. Laminin EGF-like domains are found at residues cysteine 28–proline 83, cysteine 84–glutamine 130, and cysteine 139–glutamine 186. One can recognise a Laminin EGF-like 4; first part domain in the interval cysteine 187–cysteine 196. Positions glutamine 213–glutamine 381 constitute a Laminin IV type A domain. N-linked (GlcNAc...) asparagine glycosylation is found at asparagine 342 and asparagine 362. Positions cysteine 382 to proline 415 constitute a Laminin EGF-like 4; second part domain. Laminin EGF-like domains follow at residues cysteine 416–proline 461, cysteine 462–proline 516, and cysteine 517–alanine 572. Disulfide bonds link cysteine 462–cysteine 470, cysteine 464–cysteine 481, cysteine 484–cysteine 493, cysteine 496–cysteine 514, cysteine 517–cysteine 531, cysteine 519–cysteine 538, cysteine 541–cysteine 550, cysteine 553–cysteine 570, cysteine 573–cysteine 585, cysteine 575–cysteine 591, and cysteine 593–cysteine 602. Residues cysteine 573–cysteine 602 enclose the Laminin EGF-like 8; truncated domain. A domain II and I region spans residues glutamate 603–glutamine 1193. Residues alanine 611–aspartate 718 are a coiled coil. Serine 803 and serine 805 each carry an O-linked (Xyl...) (chondroitin sulfate) serine glycan. 2 coiled-coil regions span residues alanine 811 to methionine 1076 and glutamate 1117 to glutamine 1193. N-linked (GlcNAc...) asparagine glycans are attached at residues asparagine 942 and asparagine 1033.

As to quaternary structure, laminin is a complex glycoprotein, consisting of three different polypeptide chains (alpha, beta, gamma), which are bound to each other by disulfide bonds into a cross-shaped molecule comprising one long and three short arms with globules at each end. Gamma-2 is a subunit of laminin-5 (laminin-332 or epiligrin/kalinin/nicein). In terms of processing, O-glycosylated; contains chondroitin sulfate (CS). CS attachment is on either Ser-803 or Ser-805. As to expression, the large variant is expressed only in specific epithelial cells of embryonic and neonatal tissues. In 17-week old embryo the small variant is found in cerebral cortex, lung, and distal tubes of kidney, but not in epithelia except for distal tubuli.

The protein localises to the secreted. It is found in the extracellular space. The protein resides in the extracellular matrix. Its subcellular location is the basement membrane. Its function is as follows. Binding to cells via a high affinity receptor, laminin is thought to mediate the attachment, migration and organization of cells into tissues during embryonic development by interacting with other extracellular matrix components. Ladsin exerts cell-scattering activity toward a wide variety of cells, including epithelial, endothelial, and fibroblastic cells. In Homo sapiens (Human), this protein is Laminin subunit gamma-2 (LAMC2).